Here is a 177-residue protein sequence, read N- to C-terminus: R-phycoerythrin beta chain (177 aa).

2 residues coordinate (2R,3E)-phycoerythrobilin: N35 and D39. Phycourobilin is bound by residues C50, D54, and C61. (2R,3E)-phycoerythrobilin is bound by residues N72, 77–78, C82, and 84–85; these read RR and RD. An N4-methylasparagine modification is found at N72. 147-148 contributes to the phycourobilin binding site; the sequence is SG. Residue C158 participates in (2R,3E)-phycoerythrobilin binding.

The protein belongs to the phycobiliprotein family. As to quaternary structure, heterododecamer of 6 alpha and 6 beta chains. The basic functional unit of phycobiliproteins is a ring-shaped hexamer formed from two back-to-back trimers contacting via the alpha chain subunits. The trimers are composed of alpha/beta subunit heterodimers arranged around a three-fold axis of symmetry. The phycoerythrins also contain a gamma subunit which is located in the center of the hexamer. Post-translationally, contains two covalently linked phycoerythrobilin chromophores and one covalently linked phycourobilin chromophore.

The protein resides in the plastid. The protein localises to the chloroplast thylakoid membrane. In terms of biological role, light-harvesting photosynthetic tetrapyrrole chromophore-protein from the phycobiliprotein complex. The chain is R-phycoerythrin beta chain (cpeB) from Griffithsia monilis (Red alga).